The sequence spans 459 residues: Trigger factor (459 aa).

Positions 161–246 constitute a PPIase FKBP-type domain; that stretch reads GDKVVIDFQG…IKKIMEGKLP (86 aa).

Belongs to the FKBP-type PPIase family. Tig subfamily.

It is found in the cytoplasm. The catalysed reaction is [protein]-peptidylproline (omega=180) = [protein]-peptidylproline (omega=0). Its function is as follows. Involved in protein export. Acts as a chaperone by maintaining the newly synthesized protein in an open conformation. Functions as a peptidyl-prolyl cis-trans isomerase. This is Trigger factor from Legionella pneumophila (strain Corby).